Here is a 367-residue protein sequence, read N- to C-terminus: Phosphoribosylaminoimidazole-succinocarboxamide synthase (367 aa).

The protein belongs to the SAICAR synthetase family.

The enzyme catalyses 5-amino-1-(5-phospho-D-ribosyl)imidazole-4-carboxylate + L-aspartate + ATP = (2S)-2-[5-amino-1-(5-phospho-beta-D-ribosyl)imidazole-4-carboxamido]succinate + ADP + phosphate + 2 H(+). It functions in the pathway purine metabolism; IMP biosynthesis via de novo pathway; 5-amino-1-(5-phospho-D-ribosyl)imidazole-4-carboxamide from 5-amino-1-(5-phospho-D-ribosyl)imidazole-4-carboxylate: step 1/2. This chain is Phosphoribosylaminoimidazole-succinocarboxamide synthase, found in Aliivibrio fischeri (strain ATCC 700601 / ES114) (Vibrio fischeri).